Reading from the N-terminus, the 193-residue chain is Acyl carrier protein phosphodiesterase (193 aa).

Belongs to the AcpH family.

It catalyses the reaction holo-[ACP] + H2O = apo-[ACP] + (R)-4'-phosphopantetheine + H(+). In terms of biological role, converts holo-ACP to apo-ACP by hydrolytic cleavage of the phosphopantetheine prosthetic group from ACP. The chain is Acyl carrier protein phosphodiesterase from Salmonella newport (strain SL254).